A 316-amino-acid polypeptide reads, in one-letter code: uncharacterized protein (316 aa).

Positions 1–56 (MATLSDVAKKANVSKMTVSRVINHPETVTDELKKLVHSAMKELNYIPNYAARALVQ) constitute an HTH lacI-type domain. Residues 4–23 (LSDVAKKANVSKMTVSRVIN) constitute a DNA-binding region (H-T-H motif).

This is an uncharacterized protein from Bacillus subtilis (strain 168).